The sequence spans 830 residues: Periplasmic nitrate reductase (830 aa).

A signal peptide (tat-type signal) is located at residues 1-31; that stretch reads MKLSRRDFMKANAAVAAAAAAGMTIPTVAKA. A 4Fe-4S Mo/W bis-MGD-type domain is found at 39–95; that stretch reads IKWDKAPCRFCGTGCGVLVGTQNGRIVASQGDPDSPVNRGLNCIKGYFLPKIMYGKD. Residues C46, C49, C53, and C81 each coordinate [4Fe-4S] cluster. Mo-bis(molybdopterin guanine dinucleotide)-binding positions include K83, Q150, N175, C179, 212–219, 243–247, 262–264, M372, Q376, N482, 508–509, K531, D558, and 718–727; these read WGSNMAEM, STYEH, QTD, SD, and TGRVLEHWHT. F794 lines the substrate pocket. The Mo-bis(molybdopterin guanine dinucleotide) site is built by N802 and K819.

It belongs to the prokaryotic molybdopterin-containing oxidoreductase family. NasA/NapA/NarB subfamily. Component of the periplasmic nitrate reductase NapAB complex composed of NapA and NapB. Requires [4Fe-4S] cluster as cofactor. Mo-bis(molybdopterin guanine dinucleotide) is required as a cofactor. In terms of processing, predicted to be exported by the Tat system. The position of the signal peptide cleavage has not been experimentally proven.

The protein localises to the periplasm. It catalyses the reaction 2 Fe(II)-[cytochrome] + nitrate + 2 H(+) = 2 Fe(III)-[cytochrome] + nitrite + H2O. Catalytic subunit of the periplasmic nitrate reductase complex NapAB. Receives electrons from NapB and catalyzes the reduction of nitrate to nitrite. This Yersinia pseudotuberculosis serotype IB (strain PB1/+) protein is Periplasmic nitrate reductase.